Here is a 412-residue protein sequence, read N- to C-terminus: NAD-dependent dihydropyrimidine dehydrogenase subunit PreT (412 aa).

E286 is an NAD(+) binding site.

Belongs to the NADH dehydrogenase family. As to quaternary structure, heterotetramer of 2 PreA and 2 PreT subunits.

The enzyme catalyses 5,6-dihydrouracil + NAD(+) = uracil + NADH + H(+). It catalyses the reaction 5,6-dihydrothymine + NAD(+) = thymine + NADH + H(+). Functionally, involved in pyrimidine base degradation. Catalyzes physiologically the reduction of uracil to 5,6-dihydrouracil (DHU) by using NADH as a specific cosubstrate. It also catalyzes the reverse reaction and the reduction of thymine to 5,6-dihydrothymine (DHT). The polypeptide is NAD-dependent dihydropyrimidine dehydrogenase subunit PreT (preT) (Escherichia coli O157:H7).